The primary structure comprises 397 residues: Probable inactive purple acid phosphatase 28 (397 aa).

Positions 1–30 are cleaved as a signal peptide; that stretch reads MNCSIGNWKHTVLYLTLIVSLLYFIESLIS. N-linked (GlcNAc...) asparagine glycosylation is found at asparagine 91 and asparagine 209. Positions 266 and 314 each coordinate Zn(2+). 314-316 is a substrate binding site; that stretch reads HDH. Histidine 316 contributes to the Fe cation binding site.

It belongs to the metallophosphoesterase superfamily. Purple acid phosphatase family. As to quaternary structure, homodimer. The cofactor is Fe cation. Requires Zn(2+) as cofactor. As to expression, expressed in roots, stems, leaves, flowers and siliques.

Its subcellular location is the secreted. The protein is Probable inactive purple acid phosphatase 28 (PAP28) of Arabidopsis thaliana (Mouse-ear cress).